Here is a 181-residue protein sequence, read N- to C-terminus: Large ribosomal subunit protein uL6 (181 aa).

Belongs to the universal ribosomal protein uL6 family. As to quaternary structure, part of the 50S ribosomal subunit.

Functionally, this protein binds to the 23S rRNA, and is important in its secondary structure. It is located near the subunit interface in the base of the L7/L12 stalk, and near the tRNA binding site of the peptidyltransferase center. In Phytoplasma mali (strain AT), this protein is Large ribosomal subunit protein uL6.